The primary structure comprises 286 residues: Probable transport system permease protein NifC (286 aa).

Helical transmembrane passes span 34-54, 75-95, 114-134, 152-172, 216-236, and 257-277; these read LFLALTAIYFVMLIFPIISMI, IILSFVTSLIALIFTFIIGTP, IFVEIPVVLPPAVAGIALLLA, VIFTSTAVIIAQFFVSSALYV, GLILAWIRSLGEFGATLMFAG, and IKMATAFATILYIMTFVLLLL. The ABC transmembrane type-1 domain maps to 75-278; sequence IILSFVTSLI…IMTFVLLLLV (204 aa).

This sequence belongs to the binding-protein-dependent transport system permease family. CysTW subfamily.

The protein localises to the cell membrane. Functionally, may be involved in molybdenum transport. The protein is Probable transport system permease protein NifC (nifC) of Clostridium pasteurianum.